The sequence spans 765 residues: Probable serine/threonine-protein kinase DDB_G0271402 (765 aa).

The Protein kinase domain maps to 35–328 (LEFGQEIGKG…KEITERLKSL (294 aa)). ATP is bound by residues 41–49 (IGKGAYGKI) and K62. D192 serves as the catalytic Proton acceptor. Disordered regions lie at residues 371 to 393 (IVHNNHNHSSSSNNSSGYNNNSN), 443 to 477 (SMGDESDLDSDDEDDSYTSSASSSRCNSRNGKIIN), 491 to 527 (SSDLESSPNGNNINNNNNNNNNNNNNNNNNNNNNNNS), 545 to 620 (PIQI…QQYQ), 654 to 684 (PLNISPTQNNNNNNNNSNNNNGNVNHNHHHL), 699 to 738 (IISSSSTTSSSTSTPSLVSLTSSRDHHHHHISVTSSPTNI), and 746 to 765 (ASNSSVFTPLGSGLTRTVQS). The segment covering 446–458 (DESDLDSDDEDDS) has biased composition (acidic residues). Low complexity-rich tracts occupy residues 459 to 470 (YTSSASSSRCNS), 499 to 527 (NGNNINNNNNNNNNNNNNNNNNNNNNNNS), 562 to 605 (PPTS…PKSN), 662 to 678 (NNNNNNNNSNNNNGNVN), and 699 to 720 (IISSSSTTSSSTSTPSLVSLTS).

The protein belongs to the protein kinase superfamily. TKL Ser/Thr protein kinase family.

It catalyses the reaction L-seryl-[protein] + ATP = O-phospho-L-seryl-[protein] + ADP + H(+). The catalysed reaction is L-threonyl-[protein] + ATP = O-phospho-L-threonyl-[protein] + ADP + H(+). The chain is Probable serine/threonine-protein kinase DDB_G0271402 from Dictyostelium discoideum (Social amoeba).